The chain runs to 232 residues: Response regulator MprA (232 aa).

One can recognise a Response regulatory domain in the interval 4–118 (RILVVDDDRA…ELLARMRALL (115 aa)). Residue D48 is modified to 4-aspartylphosphate. Residues 131 to 229 (SVAMTFSDLS…VRGVGYVLRE (99 aa)) constitute a DNA-binding region (ompR/PhoB-type).

Post-translationally, phosphorylated and dephosphorylated by MprB.

The protein resides in the cytoplasm. Its function is as follows. Member of the two-component regulatory system MprB/MprA which contributes to maintaining a balance among several systems involved in stress resistance and is required for establishment and maintenance of persistent infection in the host. Functions as a transcriptional regulator that recognizes a 19-bp nucleotide motif comprizing two loosely conserved 8-bp direct DNA-binding motif repeats separated by a 3-bp spacer region. In Mycobacterium ulcerans (strain Agy99), this protein is Response regulator MprA (mprA).